Here is a 333-residue protein sequence, read N- to C-terminus: Transaldolase (333 aa).

Catalysis depends on lysine 135, which acts as the Schiff-base intermediate with substrate.

The protein belongs to the transaldolase family. Type 1 subfamily. In terms of assembly, homodimer.

The protein localises to the cytoplasm. It catalyses the reaction D-sedoheptulose 7-phosphate + D-glyceraldehyde 3-phosphate = D-erythrose 4-phosphate + beta-D-fructose 6-phosphate. Its pathway is carbohydrate degradation; pentose phosphate pathway; D-glyceraldehyde 3-phosphate and beta-D-fructose 6-phosphate from D-ribose 5-phosphate and D-xylulose 5-phosphate (non-oxidative stage): step 2/3. Transaldolase is important for the balance of metabolites in the pentose-phosphate pathway. The sequence is that of Transaldolase from Prochlorococcus marinus (strain MIT 9301).